Here is a 364-residue protein sequence, read N- to C-terminus: Coproporphyrin III ferrochelatase (364 aa).

Fe-coproporphyrin III-binding residues include arginine 29 and tyrosine 118. Histidine 169 and glutamate 250 together coordinate Fe(2+).

The protein belongs to the ferrochelatase family.

It localises to the cytoplasm. The catalysed reaction is Fe-coproporphyrin III + 2 H(+) = coproporphyrin III + Fe(2+). It functions in the pathway porphyrin-containing compound metabolism; protoheme biosynthesis. In terms of biological role, involved in coproporphyrin-dependent heme b biosynthesis. Catalyzes the insertion of ferrous iron into coproporphyrin III to form Fe-coproporphyrin III. The polypeptide is Coproporphyrin III ferrochelatase (Streptococcus pneumoniae (strain Taiwan19F-14)).